Here is a 328-residue protein sequence, read N- to C-terminus: MKSLVRVAVTGAAGQIGYSLLFRIAAGEMFGKDRPVILQMLELPDEKAQAALKGVMMELEDCAFPLLAGMVGTDNPDIAFKDADVALLVGSRPRGPGMERKDLLMENAKIFTAQGAALNKVARRDVKVLVVGNPANTNAYIAMKSAPDLNPKHFTAMLRLDHNRALSQLSTKLSKPVANIEKLIVWGNHSPTMYPDYRFATADGTPIIEAINDQAWNANSFIPTVSKRGAAIIEVRGLSSAASAANAAIDHMRDWLLGSNGKWITMGVPSDGSYGIPEGMIFGFPVTTTNGEYSIVKDLPIDTFSKTYIDKTLAELEEERASIAHLLR.

Residue 11–17 (GAAGQIG) participates in NAD(+) binding. The substrate site is built by Arg94 and Arg100. NAD(+) is bound by residues Asn107, Gln114, and 131–133 (VGN). Residues Asn133 and Arg164 each contribute to the substrate site. His189 serves as the catalytic Proton acceptor.

This sequence belongs to the LDH/MDH superfamily. MDH type 2 family.

The catalysed reaction is (S)-malate + NAD(+) = oxaloacetate + NADH + H(+). Its function is as follows. Catalyzes the reversible oxidation of malate to oxaloacetate. The sequence is that of Malate dehydrogenase from Xylella fastidiosa (strain 9a5c).